Here is a 446-residue protein sequence, read N- to C-terminus: Xylose isomerase 1 (446 aa).

Residues His109 and Asp112 contribute to the active site. Positions 240, 276, 279, 304, 315, 317, and 347 each coordinate Mg(2+).

The protein belongs to the xylose isomerase family. In terms of assembly, homotetramer. Mg(2+) is required as a cofactor.

It localises to the cytoplasm. The catalysed reaction is alpha-D-xylose = alpha-D-xylulofuranose. The protein is Xylose isomerase 1 of Xanthomonas campestris pv. campestris (strain 8004).